The chain runs to 729 residues: DNA replication licensing factor MCM5 (729 aa).

Positions 326 to 532 constitute an MCM domain; the sequence is AYVKICSMIG…DQDKRIASHI (207 aa). Residue 376-383 participates in ATP binding; it reads GDPSTAKS. The Arginine finger signature appears at 508 to 511; it reads SRFD.

It belongs to the MCM family. As to quaternary structure, component of the minichromosome maintenance (MCM) complex, a heterotetramer composed of MCM2, MCM3, MCM4, MCM5, MCM6 and MCM7.

It is found in the nucleus. It carries out the reaction ATP + H2O = ADP + phosphate + H(+). Functionally, probable component of the MCM2-7 complex (MCM complex) that may function as a DNA helicase and which is essential to undergo a single round of replication initiation and elongation per cell cycle in eukaryotic cells. The polypeptide is DNA replication licensing factor MCM5 (MCM5) (Oryza sativa subsp. indica (Rice)).